A 74-amino-acid chain; its full sequence is Small ribosomal subunit protein uS8c (74 aa).

This sequence belongs to the universal ribosomal protein uS8 family. Part of the 30S ribosomal subunit.

The protein resides in the plastid. Its subcellular location is the chloroplast. In terms of biological role, one of the primary rRNA binding proteins, it binds directly to 16S rRNA central domain where it helps coordinate assembly of the platform of the 30S subunit. This is Small ribosomal subunit protein uS8c (rps8) from Oenothera ammophila (Evening primerose).